We begin with the raw amino-acid sequence, 344 residues long: N-lysine methyltransferase KMT5A-A (344 aa).

The interval 143–176 (TSSKHRKPARRKVKRSTKRAAESKSPANRKVTDY) is disordered. A compositionally biased stretch (basic residues) spans 145–160 (SKHRKPARRKVKRSTK). One can recognise an SET domain in the interval 208–329 (DGMMVRFIEG…EGEELLYDYG (122 aa)). S-adenosyl-L-methionine is bound by residues 218–220 (KGR), Tyr-263, and 290–291 (NH).

The protein belongs to the class V-like SAM-binding methyltransferase superfamily. Histone-lysine methyltransferase family. PR/SET subfamily.

The protein localises to the nucleus. Its subcellular location is the chromosome. The catalysed reaction is L-lysyl(20)-[histone H4] + S-adenosyl-L-methionine = N(6)-methyl-L-lysyl(20)-[histone H4] + S-adenosyl-L-homocysteine + H(+). The enzyme catalyses L-lysyl-[protein] + S-adenosyl-L-methionine = N(6)-methyl-L-lysyl-[protein] + S-adenosyl-L-homocysteine + H(+). Functionally, protein-lysine N-methyltransferase that monomethylates both histones and non-histone proteins. Specifically monomethylates 'Lys-20' of histone H4 (H4K20me1). H4K20me1 is enriched during mitosis and represents a specific tag for epigenetic transcriptional repression. Mainly functions in euchromatin regions, thereby playing a central role in the silencing of euchromatic genes. Required for cell proliferation, probably by contributing to the maintenance of proper higher-order structure of DNA during mitosis. Involved in chromosome condensation and proper cytokinesis. The protein is N-lysine methyltransferase KMT5A-A of Danio rerio (Zebrafish).